A 79-amino-acid polypeptide reads, in one-letter code: Translational regulator CsrA (79 aa).

The protein belongs to the CsrA/RsmA family. In terms of assembly, homodimer; the beta-strands of each monomer intercalate to form a hydrophobic core, while the alpha-helices form wings that extend away from the core.

The protein localises to the cytoplasm. Its function is as follows. A translational regulator that binds mRNA to regulate translation initiation and/or mRNA stability. Usually binds in the 5'-UTR at or near the Shine-Dalgarno sequence preventing ribosome-binding, thus repressing translation. Its main target seems to be the major flagellin gene, while its function is anatagonized by FliW. The chain is Translational regulator CsrA from Geotalea uraniireducens (strain Rf4) (Geobacter uraniireducens).